The sequence spans 935 residues: Kinesin heavy chain (935 aa).

In terms of domain architecture, Kinesin motor spans 5–329 (NIKVVCRFRP…LRFGARAKSI (325 aa)). ATP contacts are provided by residues 87 to 94 (GQTGSGKT) and 237 to 244 (GSEKVGKT). Residues 342-887 (AELKALLKKV…SQKSQNSLAA (546 aa)) are a coiled coil. 2 disordered regions span residues 400-419 (APGF…TPVP) and 898-935 (RGNG…MNSR).

This sequence belongs to the TRAFAC class myosin-kinesin ATPase superfamily. Kinesin family. Kinesin subfamily.

The protein resides in the cytoplasm. Its subcellular location is the cytoskeleton. Its function is as follows. Kinesin is a microtubule-associated force-producing protein that may play a role in organelle transport. Its motor activity is directed toward the microtubule's plus end. The speed of this motor is 4-5 times faster than its animal counterparts. This chain is Kinesin heavy chain, found in Syncephalastrum racemosum (Filamentous fungus).